The following is a 337-amino-acid chain: Phenylalanine--tRNA ligase alpha subunit (337 aa).

A Mg(2+)-binding site is contributed by Glu252.

The protein belongs to the class-II aminoacyl-tRNA synthetase family. Phe-tRNA synthetase alpha subunit type 1 subfamily. As to quaternary structure, tetramer of two alpha and two beta subunits. The cofactor is Mg(2+).

Its subcellular location is the cytoplasm. The enzyme catalyses tRNA(Phe) + L-phenylalanine + ATP = L-phenylalanyl-tRNA(Phe) + AMP + diphosphate + H(+). The protein is Phenylalanine--tRNA ligase alpha subunit of Francisella tularensis subsp. mediasiatica (strain FSC147).